The primary structure comprises 301 residues: uncharacterized protein (301 aa).

The span at 16-28 (EITEESEKTKTDL) shows a compositional bias: basic and acidic residues. The tract at residues 16–38 (EITEESEKTKTDLQKANTPNKTE) is disordered. The span at 29–38 (QKANTPNKTE) shows a compositional bias: polar residues. Residues 252–301 (KENVALKMLQRCGWKEGQGLGQHNQGIINPLHVEISGFVTETKHSKINDK) form the G-patch domain.

This is an uncharacterized protein from Schizosaccharomyces pombe (strain 972 / ATCC 24843) (Fission yeast).